Here is a 384-residue protein sequence, read N- to C-terminus: Protein NDRG1 (384 aa).

Residue serine 2 is modified to N-acetylserine. Serine 2, serine 319, and serine 326 each carry phosphoserine. The disordered stretch occupies residues arginine 325–cysteine 384. The segment covering arginine 327–serine 336 has biased composition (polar residues). At threonine 328 the chain carries Phosphothreonine; by SGK1. Phosphoserine; by SGK1 occurs at positions 330 and 332. Serine 333 carries the phosphoserine modification. Threonine 335 is subject to Phosphothreonine. A phosphoserine mark is found at serine 336 and serine 342. Tandem repeats lie at residues glycine 339–glutamate 348 and glycine 349–glutamate 358. The interval glycine 339–glutamate 358 is 2 X 10 AA tandem repeats of G-[PST]-R-S-R-S-H-T-S-E. Over residues histidine 345–arginine 361 the composition is skewed to basic and acidic residues. Phosphothreonine; by SGK1 is present on threonine 346. A Phosphoserine modification is found at serine 352. Threonine 356 is modified (phosphothreonine; by SGK1). Over residues serine 374–cysteine 384 the composition is skewed to low complexity.

It belongs to the NDRG family. Interacts with RAB4A (membrane-bound form); the interaction involves NDRG1 in vesicular recycling of CDH1. Interacts with APOA1, APOA2, PRA1 and RTN1. Under stress conditions, phosphorylated in the C-terminal on many serine and threonine residues. Phosphorylated in vitro by PKA. Phosphorylation enhanced by increased intracellular cAMP levels. Homocysteine induces dephosphorylation. Phosphorylation by SGK1 is cell cycle dependent.

It localises to the cytoplasm. The protein localises to the cytosol. Its subcellular location is the cytoskeleton. It is found in the microtubule organizing center. The protein resides in the centrosome. It localises to the nucleus. The protein localises to the cell membrane. Stress-responsive protein involved in hormone responses, cell growth, and differentiation. Acts as a tumor suppressor in many cell types. Necessary but not sufficient for p53/TP53-mediated caspase activation and apoptosis. Has a role in cell trafficking notably of the Schwann cell and is necessary for the maintenance and development of the peripheral nerve myelin sheath. Required for vesicular recycling of CDH1 and TF. May also function in lipid trafficking. Protects cells from spindle disruption damage. Functions in p53/TP53-dependent mitotic spindle checkpoint. Regulates microtubule dynamics and maintains euploidy. In Bos taurus (Bovine), this protein is Protein NDRG1 (NDRG1).